A 208-amino-acid chain; its full sequence is uncharacterized protein (208 aa).

The segment covering 118 to 134 (QYPNQYQQQPQQQQPGY) has biased composition (low complexity). The segment at 118 to 208 (QYPNQYQQQP…HKKEKNEIKE (91 aa)) is disordered. The segment covering 138–175 (NYNQPPVQLNKQAYDNYQQNDYKSNNQPNLAKENNISN) has biased composition (polar residues). A compositionally biased stretch (basic residues) spans 187–201 (KKEKKHSFFSKLHKK).

This is an uncharacterized protein from Dictyostelium discoideum (Social amoeba).